The sequence spans 509 residues: Maturase K (509 aa).

Belongs to the intron maturase 2 family. MatK subfamily.

It is found in the plastid. The protein resides in the chloroplast. Functionally, usually encoded in the trnK tRNA gene intron. Probably assists in splicing its own and other chloroplast group II introns. The polypeptide is Maturase K (Nicotiana rustica (Aztec tobacco)).